Here is a 305-residue protein sequence, read N- to C-terminus: Ornithine carbamoyltransferase, catabolic (305 aa).

Carbamoyl phosphate-binding positions include 50–53, glutamine 77, arginine 101, and 128–131; these read STRT and HPLQ. L-ornithine contacts are provided by residues asparagine 159, aspartate 223, and 227 to 228; that span reads SM. Carbamoyl phosphate-binding positions include 263 to 264 and arginine 291; that span reads CL.

This sequence belongs to the aspartate/ornithine carbamoyltransferase superfamily. OTCase family.

It is found in the cytoplasm. It catalyses the reaction carbamoyl phosphate + L-ornithine = L-citrulline + phosphate + H(+). Its pathway is amino-acid degradation; L-arginine degradation via ADI pathway; carbamoyl phosphate from L-arginine: step 2/2. Functionally, reversibly catalyzes the transfer of the carbamoyl group from carbamoyl phosphate (CP) to the N(epsilon) atom of ornithine (ORN) to produce L-citrulline. In Thermoplasma acidophilum (strain ATCC 25905 / DSM 1728 / JCM 9062 / NBRC 15155 / AMRC-C165), this protein is Ornithine carbamoyltransferase, catabolic.